Consider the following 408-residue polypeptide: tRNA-specific 2-thiouridylase MnmA (408 aa).

Residues 27–34 (AMSGGVDS) and Leu-53 each bind ATP. Cys-121 serves as the catalytic Nucleophile. Cys-121 and Cys-222 are oxidised to a cystine. Gly-145 contributes to the ATP binding site. Residues 172 to 174 (RDQ) are interaction with tRNA. Cys-222 serves as the catalytic Cysteine persulfide intermediate.

Belongs to the MnmA/TRMU family.

It localises to the cytoplasm. It catalyses the reaction S-sulfanyl-L-cysteinyl-[protein] + uridine(34) in tRNA + AH2 + ATP = 2-thiouridine(34) in tRNA + L-cysteinyl-[protein] + A + AMP + diphosphate + H(+). Its function is as follows. Catalyzes the 2-thiolation of uridine at the wobble position (U34) of tRNA, leading to the formation of s(2)U34. The polypeptide is tRNA-specific 2-thiouridylase MnmA (Rhizobium etli (strain ATCC 51251 / DSM 11541 / JCM 21823 / NBRC 15573 / CFN 42)).